A 287-amino-acid chain; its full sequence is Universal stress protein Slr1230 (287 aa).

This sequence belongs to the universal stress protein A family.

This is Universal stress protein Slr1230 from Synechocystis sp. (strain ATCC 27184 / PCC 6803 / Kazusa).